The primary structure comprises 142 residues: Large ribosomal subunit protein uL11 (142 aa).

Belongs to the universal ribosomal protein uL11 family. Part of the ribosomal stalk of the 50S ribosomal subunit. Interacts with L10 and the large rRNA to form the base of the stalk. L10 forms an elongated spine to which L12 dimers bind in a sequential fashion forming a multimeric L10(L12)X complex. One or more lysine residues are methylated.

In terms of biological role, forms part of the ribosomal stalk which helps the ribosome interact with GTP-bound translation factors. This Rhodospirillum rubrum (strain ATCC 11170 / ATH 1.1.1 / DSM 467 / LMG 4362 / NCIMB 8255 / S1) protein is Large ribosomal subunit protein uL11.